Here is a 443-residue protein sequence, read N- to C-terminus: KH domain-containing, RNA-binding, signal transduction-associated protein 1 (443 aa).

The disordered stretch occupies residues 1-96; it reads MQRRDDPAAR…LPPSATASVK (96 aa). The span at 10 to 21 shows a compositional bias: low complexity; sequence RMSRSSGRSGSM. Phosphoserine occurs at positions 18, 20, and 29. Threonine 33 bears the Phosphothreonine mark. Arginine 45 is subject to Asymmetric dimethylarginine; by PRMT1. Arginine 52 is modified (asymmetric dimethylarginine; partial; by PRMT1). A Phosphoserine modification is found at serine 58. At threonine 84 the chain carries Phosphothreonine; by MAPK1. Glycyl lysine isopeptide (Lys-Gly) (interchain with G-Cter in SUMO2) cross-links involve residues lysine 96 and lysine 102. The tract at residues 100–260 is involved in homodimerization; that stretch reads ENKYLPELMA…VKKFLVPDMM (161 aa). Serine 113 carries the phosphoserine modification. A Glycyl lysine isopeptide (Lys-Gly) (interchain with G-Cter in SUMO2) cross-link involves residue lysine 139. Serine 150 bears the Phosphoserine mark. The 27-residue stretch at 171–197 folds into the KH domain; it reads NFVGKILGPQGNTIKRLQEETGAKISV. Residue lysine 175 is modified to N6-acetyllysine; alternate. Lysine 175 participates in a covalent cross-link: Glycyl lysine isopeptide (Lys-Gly) (interchain with G-Cter in SUMO2); alternate. Position 183 is a phosphothreonine (threonine 183). Residues 280-293 are compositionally biased toward low complexity; that stretch reads PSRGRGVPVRGRGA. A disordered region spans residues 280 to 316; that stretch reads PSRGRGVPVRGRGAAPPPPPVPRGRGVGPPRGALVRG. Omega-N-methylarginine is present on residues arginine 282, arginine 284, and arginine 291. At arginine 304 the chain carries Asymmetric dimethylarginine; by PRMT1. The segment covering 307–316 has biased composition (low complexity); it reads GPPRGALVRG. An omega-N-methylarginine; by PRMT1 mark is found at arginine 310, arginine 315, arginine 320, and arginine 325. Position 320 is a dimethylated arginine; in A2780 ovarian carcinoma cell line (arginine 320). Residues 327-346 are disordered; the sequence is ATVTRGVPPPPTVRGAPAPR. 2 positions are modified to dimethylated arginine; in A2780 ovarian carcinoma cell line: arginine 331 and arginine 340. Arginine 331 carries the post-translational modification Asymmetric dimethylarginine; alternate. Arginine 331 carries the post-translational modification Omega-N-methylarginine; by PRMT1; alternate. An Omega-N-methylarginine; by PRMT1 modification is found at arginine 340. The segment at 351-443 is interaction with HNRNPA1; it reads GIQRIPLPPP…AYREHPYGRY (93 aa). At tyrosine 387 the chain carries Phosphotyrosine. Serine 390 carries the post-translational modification Phosphoserine. An interaction with ZBTB7A region spans residues 400-420; it reads GHGEVQDSYEAYGQDDWNGTR. Positions 411–443 are disordered; that stretch reads YGQDDWNGTRPSLKAPPARPVKGAYREHPYGRY. Residue lysine 432 forms a Glycyl lysine isopeptide (Lys-Gly) (interchain with G-Cter in SUMO2) linkage. Residues 434–443 are compositionally biased toward basic and acidic residues; that stretch reads AYREHPYGRY. Tyrosine 435, tyrosine 440, and tyrosine 443 each carry phosphotyrosine; by PTK6.

This sequence belongs to the KHDRBS family. Self-associates to form homooligomers when bound to RNA, oligomerization appears to be limited when binding to proteins; dimerization increases RNA affinity. Forms a trimeric complex in the nucleus consisting of BANP, HDAC6 and KHDRBS1/SAM68; HDAC6 keeps KHDRBS1 in a deacetylated state which inhibits the inclusion of CD44 alternate exons. The complex is disrupted by MAPK1/MAPK3-mediated phosphorylation of BANP which results in BANP export to the cytoplasm. This facilitates acetylation of KHDRBS1 and CD44 variant exon inclusion. Interacts with KHDRBS3/SLIM-2. Interacts with KHDRBS2/SLIM-1; heterooligomer formation of KHDRBS family proteins may modulate RNA substrate specificity. Interacts with RASA1, LCK, FYN, PTPN6, PLCG1, GRB2, CBL, JAK3, PIK3R, STAT3, APC, HNRNPA1. Interacts with PTK6 (via SH3 and SH2 domains). Forms a complex with ILF2, ILF3, YLPM1, RBMX, NCOA5 and PPP1CA. Does not interact with TPR. Interacts with PRMT1. Binds WBP4/FBP21 (via WW domains), FNBP4/FBP30 (via WW domains). Interacts (via Arg/Gly-rich-flanked Pro-rich regions) with FYN (via the SH3 domain). Interacts with the non-receptor tyrosine kinase SRMS; the interaction leads to phosphorylation of KHDRBS1. Interacts with ZBTB7A; negatively regulates KHDRBS1 splicing activity toward BCL2L1. In terms of processing, tyrosine phosphorylated by several non-receptor tyrosine kinases including LCK, FYN and JAK3. Also tyrosine phosphorylated by the non-receptor tyrosine kinase SRMS in an EGF-dependent manner. Negatively correlates with ability to bind RNA but required for many interactions with proteins. Phosphorylation by PTK6 negatively regulates its RNA binding ability. Phosphorylation by PTK6 at Tyr-440 dictates the nuclear localization of KHDRBS1. Phosphorylation at Tyr-387 disrupts interaction with APC. Phosphorylation at tyrosine residues by FYN inverts activity on modulation of BCL2L1 alternative splicing. Acetylated. Positively correlates with ability to bind RNA. Deacetylated by HDAC6; this regulates alternative splicing by inhibiting the inclusion of CD44 alternate exons. Post-translationally, arginine methylation is required for nuclear localization. Also can affect interaction with other proteins. Inhibits interaction with Src-like SH3 domains, but not interaction with WW domains of WBP4/FBP21 and FNBP4/FBP30. Ubiquitously expressed in all tissue examined. Isoform 1 is expressed at lower levels in brain, skeletal muscle, and liver whereas isoform 3 is intensified in skeletal muscle and in liver.

The protein localises to the nucleus. The protein resides in the cytoplasm. It is found in the membrane. In terms of biological role, recruited and tyrosine phosphorylated by several receptor systems, for example the T-cell, leptin and insulin receptors. Once phosphorylated, functions as an adapter protein in signal transduction cascades by binding to SH2 and SH3 domain-containing proteins. Role in G2-M progression in the cell cycle. Represses CBP-dependent transcriptional activation apparently by competing with other nuclear factors for binding to CBP. Also acts as a putative regulator of mRNA stability and/or translation rates and mediates mRNA nuclear export. Positively regulates the association of constitutive transport element (CTE)-containing mRNA with large polyribosomes and translation initiation. According to some authors, is not involved in the nucleocytoplasmic export of unspliced (CTE)-containing RNA species according to. RNA-binding protein that plays a role in the regulation of alternative splicing and influences mRNA splice site selection and exon inclusion. Binds to RNA containing 5'-[AU]UAA-3' as a bipartite motif spaced by more than 15 nucleotides. Binds poly(A). Can regulate CD44 alternative splicing in a Ras pathway-dependent manner. In cooperation with HNRNPA1 modulates alternative splicing of BCL2L1 by promoting splicing toward isoform Bcl-X(S), and of SMN1. Can regulate alternative splicing of NRXN1 and NRXN3 in the laminin G-like domain 6 containing the evolutionary conserved neurexin alternative spliced segment 4 (AS4) involved in neurexin selective targeting to postsynaptic partners. In a neuronal activity-dependent manner cooperates synergistically with KHDRBS2/SLIM-1 in regulation of NRXN1 exon skipping at AS4. The cooperation with KHDRBS2/SLIM-1 is antagonistic for regulation of NXRN3 alternative splicing at AS4. Its function is as follows. Isoform 3, which is expressed in growth-arrested cells only, inhibits S phase. The polypeptide is KH domain-containing, RNA-binding, signal transduction-associated protein 1 (Homo sapiens (Human)).